A 1018-amino-acid chain; its full sequence is Cell wall protein 1 (1018 aa).

A signal peptide spans M1–A17. The CFEM 1 domain maps to N32–V143. 4 disulfides stabilise this stretch: C60-C100, C64-C95, C74-C81, and C83-C116. Heme is bound at residue D78. The tract at residues S147–I227 is disordered. A compositionally biased stretch (polar residues) spans E148–V164. Residues E165–E221 show a composition bias toward low complexity. 2 consecutive CFEM domains span residues N223 to V334 and S393 to V504. 4 cysteine pairs are disulfide-bonded: C251-C291, C255-C286, C265-C272, and C274-C307. Position 269 (D269) interacts with heme. Positions S338–S396 are disordered. 4 cysteine pairs are disulfide-bonded: C421–C461, C425–C456, C435–C442, and C444–C477. Residue D439 coordinates heme. Residues S507–Y557 form a disordered region. Over residues S509–E553 the composition is skewed to low complexity. In terms of domain architecture, CFEM 4 spans N555–V666. Cystine bridges form between C583-C623, C587-C618, C597-C604, and C606-C639. Residue D601 coordinates heme. Residues S677–S785 form a disordered region. Positions S690–S766 are enriched in low complexity. N-linked (GlcNAc...) asparagine glycosylation is found at N698, N708, N718, N729, N743, N753, N769, N798, and N965. Residues Y767–S785 are compositionally biased toward polar residues. The GPI-anchor amidated serine moiety is linked to residue S989. The propeptide at V990–I1018 is removed in mature form.

Belongs to the RBT5 family. Post-translationally, the GPI-anchor is attached to the protein in the endoplasmic reticulum and serves to target the protein to the cell surface. There, the glucosamine-inositol phospholipid moiety is cleaved off and the GPI-modified mannoprotein is covalently attached via its lipidless GPI glycan remnant to the 1,6-beta-glucan of the outer cell wall layer.

Its subcellular location is the secreted. The protein resides in the cell wall. The protein localises to the membrane. In terms of biological role, heme-binding protein involved in heme-iron utilization. The ability to acquire iron from host tissues is a major virulence factor of pathogenic microorganisms. Required for biofilm formation. The protein is Cell wall protein 1 (CSA1) of Candida albicans (strain SC5314 / ATCC MYA-2876) (Yeast).